We begin with the raw amino-acid sequence, 770 residues long: MAQWNQLQQLDTRYLEQLHQLYSDSFPMELRQLLAPWIESQDWAYAASKESHATLVFHNLLGEIDQQYSRFLQESNVLYQHNLRRIKQFLQSRYLEKPMEIARIVARCLWEESRLLQTAATAAQQGGQANHPTAAVVTEKQQMLEQHLQDVRKRVQDLEQKMKVVENLLDDFDFNYKTLKSQGDMQDLNGNNQSVTRQKMQQLEQMLTALDQMRRSIVSELAGLLSAMEYVQKTLTDEELADWKRRQQIACIGGPPNICLDRLENWITSLAESQLQTRQQIKKLEELQQKVSYKGDPIVQHRPMLEERIVELFRNLMKSAFVVERQPCMPMHPDRPLVIKTGVQFTTKVRLLVKFPELNYQLKIKVCIDKDSGDVAALRGSRKFNILGTNTKVMNMEESNNGSLSAEFKHLTLREQRCGNGGRANCDASLIVTEELHLITFETEVYHQGLKIDLETHSLPVVVISNICQMPNAWASILWYNMLTNNPKNVNFFTKPPIGTWDQVAEVLSWQFSSTTKRGLSIEQLTTLAEKLLGPGVNYSGCQITWAKFCKENMAGKGFSFWVWLDNIIDLVKKYILALWNEGYIMGFISKERERAILSTKPPGTCLLRFSESSKEGGVTFTWVEKDISGKTQIQSVEPYTKQQLNNMSFAEIIMGYKIMDATNILVSPLVYLYPDIPKEDAFGKYCRPESQEHPEADPGSAAPYLKTKFICVTPTTCSNTIDLPMSPRTLDSLMQFGNNGEAAEPSAGGQFESLTFDMELTSECATSPM.

Ala-2 carries the N-acetylalanine modification. Lys-49 and Lys-87 each carry N6-acetyllysine. Positions 150 to 162 (DVRKRVQDLEQKM) match the Essential for nuclear import motif. In terms of domain architecture, SH2 spans 580–670 (WNEGYIMGFI…DATNILVSPL (91 aa)). 3 positions are modified to allysine; alternate: Lys-601, Lys-615, and Lys-631. N6-acetyllysine; alternate occurs at positions 601, 615, and 631. Tyr-640 carries the phosphotyrosine; by TYK2 modification. An Allysine; alternate modification is found at Lys-685. Lys-685 is subject to N6-acetyllysine; alternate. Tyr-705 is modified (phosphotyrosine; by FER and PTK6). Lys-707 is subject to N6-acetyllysine. Phosphothreonine is present on Thr-714. Ser-727 is subject to Phosphoserine; by DYRK2, NLK, NEK6, IRAK1, RPS6KA5, ZIPK/DAPK3 and PKC/PRKCE.

This sequence belongs to the transcription factor STAT family. Forms a homodimer or a heterodimer with a related family member (at least STAT1). Component of a promoter-binding complex composed of STAT3, NFATC3 and NFATC4; complex formation is enhanced by calcineurin. Interacts with IL31RA, NCOA1, PELP1, SIPAR, SOCS7, STATIP1 and TMF1. Interacts with IL23R in presence of IL23. Interacts (via SH2 domain) with NLK. Interacts with ARL2BP; the interaction is enhanced by LIF and JAK1 expression. Interacts with KPNA4 and KPNA5; KPNA4 may be the primary mediator of nuclear import. Interacts with CAV2; the interaction is increased on insulin-induced tyrosine phosphorylation of CAV2 and leads to STAT3 activation. Interacts with ARL2BP; interaction is enhanced with ARL2. Interacts with NEK6. Binds to CDK9 when activated and nuclear. Interacts with BMX. Interacts with ZIPK/DAPK3. Interacts with PIAS3; the interaction occurs on stimulation by IL6, CNTF or OSM and inhibits the DNA binding activity of STAT3. In prostate cancer cells, interacts with PRKCE and promotes DNA binding activity of STAT3. Interacts with STMN3, antagonizing its microtubule-destabilizing activity. Interacts with the 'Lys-129' acetylated form of BIRC5/survivin. Interacts with FER. Interacts (via SH2 domain) with EIF2AK2/PKR (via the kinase catalytic domain). Interacts with FGFR4. Interacts with INPP5F; the interaction is independent of STAT3 Tyr-705 phosphorylation status. Interacts with OCIAD1 and OCIAD2. Interacts (unphosphorylated or phosphorylated at Ser-727) with PHB1. Interacts and may form heterodimers with NHLH1. Found in a complex with SLC39A6, SLC39A10 and with the 'Ser-727' phosphorylated form of STAT3 throughout mitosis. Interacts (when acetylated) with EP300 (via bromo domain); interaction takes place following STAT3 acetylation by EP300 and promotes enhanceosome assembly. Interacts (when acetylated) with BRD2 (via bromo domain); interaction promotes STAT3 recruitment to chromatin and T-helper Th17 cell differentiation. Interacts with FAM220A/SIPAR; the interaction occurs in both the nucleus and the cytoplasm, is enhanced by IL6 and promotes STAT3 dephosphorylation. Interacts in both unphosphorylated and phosphorylated forms with FAM220A but interacts preferentially in the phosphorylated form in the nucleus. Interacts with PTPN2; the interaction is promoted by FAM220A and leads to STAT3 dephosphorylation which negatively regulates STAT3 transcriptional activator activity. Post-translationally, activated through tyrosine phosphorylation by BMX. Tyrosine phosphorylated in response to IL-6, IL-11, CNTF, LIF, CSF-1, EGF, PDGF, IFN-alpha and OSM. Tyrosine phosphorylated in response to constitutively activated FGFR1, FGFR2, FGFR3 and FGFR4. Phosphorylated on serine upon DNA damage, probably by ATM or ATR. Serine phosphorylation is important for the formation of stable DNA-binding STAT3 homodimers and maximal transcriptional activity. ARL2BP may participate in keeping the phosphorylated state of STAT3 within the nucleus. Tyrosine phosphorylated upon stimulation with EGF. Upon LPS challenge, phosphorylated within the nucleus by IRAK1. Phosphorylated on Ser-727 by RPS6KA5. Dephosphorylation on tyrosine residues by PTPN2 negatively regulates IL6/interleukin-6 signaling. Phosphorylation at Tyr-705 by FER, isoform M2 of PKM (PKM2) or PTK6 leads to an increase of its transcriptional activity. Phosphorylation at Tyr-705 is increased in the presence of calcineurin. Phosphorylation at Tyr-640 by TYK2 negatively regulates transcriptional activity. In terms of processing, acetylated on lysine residues by EP300/p300, promoting its activation. Acetylation at Lys-49 and Lys-87 by EP300/p300 promotes its activation. Acetylation at Lys-87 by EP300/p300 promotes its association with BRD2 and recruitment to chromatin. Deacetylated at Lys-49 and Lys-87 by HDAC1. Acetylation at Lys-685 by EP300/p300 promotes its homodimerization and activation. Deacetylated at Lys-685 by HDAC3. Acetylated on lysine residues by CREBBP. Deacetylation by LOXL3 leads to disrupt STAT3 dimerization and inhibit STAT3 transcription activity. Oxidation of lysine residues to allysine on STAT3 preferentially takes place on lysine residues that are acetylated. Some lysine residues are oxidized to allysine by LOXL3, leading to disrupt STAT3 dimerization and inhibit STAT3 transcription activity. Oxidation of lysine residues to allysine on STAT3 preferentially takes place on lysine residues that are acetylated.

The protein localises to the cytoplasm. It localises to the nucleus. Functionally, signal transducer and transcription activator that mediates cellular responses to interleukins, KITLG/SCF, LEP and other growth factors. Once activated, recruits coactivators, such as NCOA1 or MED1, to the promoter region of the target gene. May mediate cellular responses to activated FGFR1, FGFR2, FGFR3 and FGFR4. Upon activation of IL6ST/gp130 signaling by interleukin-6 (IL6), binds to the IL6-responsive elements identified in the promoters of various acute-phase protein genes. Activated by IL31 through IL31RA. Acts as a regulator of inflammatory response by regulating differentiation of naive CD4(+) T-cells into T-helper Th17 or regulatory T-cells (Treg): acetylation promotes its transcription activity and cell differentiation while deacetylation and oxidation of lysine residues by LOXL3 inhibits differentiation. Involved in cell cycle regulation by inducing the expression of key genes for the progression from G1 to S phase, such as CCND1. Mediates the effects of LEP on melanocortin production, body energy homeostasis and lactation. May play an apoptotic role by transctivating BIRC5 expression under LEP activation. Cytoplasmic STAT3 represses macroautophagy by inhibiting EIF2AK2/PKR activity. Plays a crucial role in basal beta cell functions, such as regulation of insulin secretion. Following JAK/STAT signaling activation and as part of a complex with NFATC3 and NFATC4, binds to the alpha-beta E4 promoter region of CRYAB and activates transcription in cardiomyocytes. Plays an important role in host defense in methicillin-resistant S.aureus lung infection by regulating the expression of the antimicrobial lectin REG3G. This is Signal transducer and activator of transcription 3 (STAT3) from Bos taurus (Bovine).